The sequence spans 144 residues: Flagellar assembly factor FliW (144 aa).

This sequence belongs to the FliW family. In terms of assembly, interacts with translational regulator CsrA and flagellin(s).

The protein localises to the cytoplasm. In terms of biological role, acts as an anti-CsrA protein, binds CsrA and prevents it from repressing translation of its target genes, one of which is flagellin. Binds to flagellin and participates in the assembly of the flagellum. This chain is Flagellar assembly factor FliW, found in Bacillus pumilus (strain SAFR-032).